The following is a 231-amino-acid chain: Protein OPG061 (231 aa).

It belongs to the orthopoxvirus OPG058 family.

It localises to the host nucleus. The protein localises to the host nucleolus. This is Protein OPG061 (OPG061) from Vaccinia virus (strain L-IVP) (VACV).